Consider the following 244-residue polypeptide: Acetoacetate decarboxylase (244 aa).

The active-site Schiff-base intermediate with acetoacetate is K115.

It belongs to the ADC family. As to quaternary structure, homododecamer.

It carries out the reaction acetoacetate + H(+) = acetone + CO2. Catalyzes the conversion of acetoacetate to acetone and carbon dioxide. The polypeptide is Acetoacetate decarboxylase (Clostridium acetobutylicum (strain ATCC 824 / DSM 792 / JCM 1419 / IAM 19013 / LMG 5710 / NBRC 13948 / NRRL B-527 / VKM B-1787 / 2291 / W)).